The sequence spans 558 residues: N-acetylglucosamine-6-O-sulfatase (558 aa).

Position 101 is a 3-oxoalanine (Ser) (S101).

The protein belongs to the sulfatase family. The conversion to 3-oxoalanine (also known as C-formylglycine, FGly), of a serine or cysteine residue in prokaryotes and of a cysteine residue in eukaryotes, is critical for catalytic activity.

In terms of biological role, exosulfatase involved in the degradation of the glycosaminoglycan (GAG) heparan sulfate (HS). Catalyzes the hydrolysis of the 6-sulfate groups of the N-acetyl-D-glucosamine 6-sulfate units. GAG-specific sulfatases play a key role in the persistence of the major human gut symbiont B.thetaiotaomicron in the host gastrointestinal tract. This chain is N-acetylglucosamine-6-O-sulfatase, found in Bacteroides thetaiotaomicron (strain ATCC 29148 / DSM 2079 / JCM 5827 / CCUG 10774 / NCTC 10582 / VPI-5482 / E50).